Here is a 78-residue protein sequence, read N- to C-terminus: uncharacterized protein (78 aa).

The first 45 residues, 1–45, serve as a signal peptide directing secretion; sequence MPVIAIIAIVIIVIILNKTGVSDSLTALTLATVAALLTGGGAAGA.

To E.coli YkfL.

This is an uncharacterized protein from Escherichia coli (strain K12).